Consider the following 158-residue polypeptide: Class 10 plant pathogenesis-related protein 2B (158 aa).

Asp-8 is a trans-zeatin binding site. The Ca(2+) site is built by Pro-32, Val-35, and Ile-38. The trans-zeatin site is built by Glu-60, His-69, Tyr-81, and Tyr-83. Tyr-83 provides a ligand contact to melatonin.

This sequence belongs to the BetVI family.

The protein resides in the cytoplasm. It localises to the cytosol. Its function is as follows. Class II ribonuclease (RNase). Binds to several cytokinins including natural adenine-type (e.g. trans-zeatin and kinetin) and artificial urea-type (e.g. N,N'-diphenylurea and N-phenyl-N'-(2-chloro-4-pyridyl)urea) hormones. Interacts with melatonin. This Lupinus luteus (European yellow lupine) protein is Class 10 plant pathogenesis-related protein 2B.